A 956-amino-acid chain; its full sequence is Calsyntenin-3 (956 aa).

Positions 1 to 19 are cleaved as a signal peptide; sequence MTLLLVSLLLASLLQISSG. The Cytoplasmic segment spans residues 1–21; that stretch reads MTLLLVSLLLASLLQISSGNK. Residues 20–847 are Extracellular-facing; that stretch reads NKANKHKPWI…SHRNSMVPSA (828 aa). The helical intramembrane region spans 22–42; sequence ANKHKPWIEAEYQGIVMENDN. Cadherin domains follow at residues 29–145 and 146–246; these read IEAE…APVF and VERL…KPSW. The Cytoplasmic segment spans residues 43–73; that stretch reads TVLLNPPLFALDKDAPLRYAGEICGFRLHGS. An intramembrane region (helical) is located at residues 74–94; that stretch reads GVPFEAVILDKATGEGLIRAK. The Cytoplasmic segment spans residues 95-139; sequence EPVDCEAQKEHTFTIQAYDCGEGPDGTNTKKSHKATVHVRVNDVN. An intramembrane region (helical) is located at residues 140–160; the sequence is EFAPVFVERLYRAAVTEGKLY. Residues 161–248 are Cytoplasmic-facing; the sequence is DRILRVEAID…KPTCKPSWQG (88 aa). A helical transmembrane segment spans residues 249 to 269; that stretch reads WNKRIEYAPGAGSLALFPGIR. At 270–357 the chain is on the lumenal side; sequence LETCDEPLWN…GTQAVQVPLG (88 aa). Residues asparagine 299, asparagine 327, asparagine 347, asparagine 507, and asparagine 740 are each glycosylated (N-linked (GlcNAc...) asparagine). Residues 848 to 868 form a helical membrane-spanning segment; it reads ATLIIVVCVGFLVLMVILGLV. Residues 869-956 are Cytoplasmic-facing; it reads RIHSLHRRVS…RIIESPPHRY (88 aa). The interval 916–956 is disordered; that stretch reads QTCVAGVAGGQQEEEDSSDSEAADSPSSDERRIIESPPHRY. Over residues 927–937 the composition is skewed to acidic residues; sequence QEEEDSSDSEA. Residues 943-956 show a composition bias toward basic and acidic residues; sequence SDERRIIESPPHRY.

It belongs to the calsyntenin family. In terms of assembly, interacts (via cadherin domains) with both alpha and beta isoforms of neurexins (NRXN1, NRXN2 and NRXN3). Directly interacts with APBA2. Forms a tripartite complex with APBA2 and APP. Interacts with low affinity with KLC1. Interacts with SLC23A2/SVCT2. Interacts with CIDEA; inhibiting the lipid transferase activity of CIDEA. Interacts with CIDEC; inhibiting the lipid transferase activity of CIDEC. Proteolytically processed under normal cellular conditions. A primary zeta-cleavage generates a large extracellular (soluble) N-terminal domain (sAlc) and a short C-terminal transmembrane fragment (CTF1). A secondary cleavage catalyzed by gamma-secretase within the transmembrane domain releases the beta-Alc-beta chain in the extracellular milieu and produces an intracellular fragment (AlcICD). This processing is strongly suppressed in the tripartite complex formed with APBA2 and APP, which seems to prevent the association with gamma-secretase. In terms of processing, ubiquitinated: endoplasmic reticulum-localized protein is ubiquitinated and degraded by the endoplasmic reticulum-associated degradation (ERAD) pathway. Restricted to the brain (at protein level). In the cerebral cortex, found in the somas and neuropil of all layers. Expressed at highest levels in neurons of cortical layer 5 and, at lower levels, in neurons of the upper layers. Highly expressed in Purkinje cells. Also found in a few scattered interneurons throughout the granule cell layer and occasionally in neurons in the molecular layer (at protein level). In all layers, high levels in a subpopulation of presumptive GABAergic neurons (based on morphology). In terms of tissue distribution, expression is restricted to adipose tissue, with high expression in thermogenic adipocytes (brown adipose tissue).

Its subcellular location is the postsynaptic cell membrane. The protein resides in the endoplasmic reticulum membrane. It localises to the golgi apparatus membrane. The protein localises to the cell projection. It is found in the dendrite. Its subcellular location is the lipid droplet. Functionally, postsynaptic adhesion molecule that binds to presynaptic neurexins to mediate both excitatory and inhibitory synapse formation. Promotes synapse development by acting as a cell adhesion molecule at the postsynaptic membrane, which associates with both neurexin-alpha and neurexin-beta proteins at the presynaptic membrane. Regulates the balance between excitatory and inhibitory synapses by inhibiting formation of excitatory parallel-fiber synapses and promoting formation of inhibitory synapses in the same neuron. May also be involved in ascorbate (vitamin C) uptake via its interaction with SLC23A2/SVCT2. Complex formation with APBA2 and APP, stabilizes APP metabolism and enhances APBA2-mediated suppression of beta-APP40 secretion, due to the retardation of intracellular APP maturation. Its function is as follows. Adipose-specific isoform that plays a key role in adaptive thermogenesis. Facilitates the efficient use of stored triglyceride by promoting multilocular morphology of thermogenic adipocytes: acts by inhibiting the activity of CIDEA and CIDEC on lipid droplets, thereby preventing lipid droplet fusion and facilitating lipid utilization. May also participate in adaptive thermogenesis by promoting sympathetic innervation of thermogenic adipose tissue: acts by driving secretion of neurotrophic factor S100B from brown adipocytes, stimulating neurite outgrowth from sympathetic neurons. The sequence is that of Calsyntenin-3 from Mus musculus (Mouse).